Here is a 306-residue protein sequence, read N- to C-terminus: MSEENKSVSTPCPPDKIIFDAERGEYICSETGEVLEDKIIDQGPEWRAFTPEEKEKRSRVGGPLNNTIHDRGLSTLIDWKDKDAMGRTLDPKRRLEALRWRKWQIRARIQSSIDRNLAQAMNELERIGNLLNLPKSVKDEAALIYRKAVEKGLVRGRSIESVVAAAIYAACRRMKLARTLDEIAQYTKANRKEVARCYRLLLRELDVSVPVSDPKDYVTRIANLLGLSGAVMKTAAEIIDKAKGSGLTAGKDPAGLAAAAIYIASLLHDERRTQKEIAQVAGVTEVTVRNRYKELTQELKISIPTQ.

Tandem repeats lie at residues 122-205 (NELE…LREL) and 216-297 (DYVT…ELTQ).

This sequence belongs to the TFIIB family.

Functionally, stabilizes TBP binding to an archaeal box-A promoter. Also responsible for recruiting RNA polymerase II to the pre-initiation complex (DNA-TBP-TFIIB). The protein is Transcription initiation factor IIB of Saccharolobus shibatae (strain ATCC 51178 / DSM 5389 / JCM 8931 / NBRC 15437 / B12) (Sulfolobus shibatae).